The primary structure comprises 81 residues: Putative defensin-like protein 148 (81 aa).

Residues 1–24 (MIKSFQLSFTVLIVFTVLILGVVG) form the signal peptide. Disulfide bonds link C34–C80, C43–C63, C48–C74, and C52–C76.

The protein belongs to the DEFL family.

The protein resides in the secreted. This Arabidopsis thaliana (Mouse-ear cress) protein is Putative defensin-like protein 148 (LCR4).